The following is a 122-amino-acid chain: Large ribosomal subunit protein uL14 (122 aa).

The protein belongs to the universal ribosomal protein uL14 family. Part of the 50S ribosomal subunit. Forms a cluster with proteins L3 and L19. In the 70S ribosome, L14 and L19 interact and together make contacts with the 16S rRNA in bridges B5 and B8.

In terms of biological role, binds to 23S rRNA. Forms part of two intersubunit bridges in the 70S ribosome. This chain is Large ribosomal subunit protein uL14, found in Bartonella bacilliformis (strain ATCC 35685 / KC583 / Herrer 020/F12,63).